Here is a 522-residue protein sequence, read N- to C-terminus: Cytochrome P450 monooxygenase FGSG_08207 (522 aa).

A helical membrane pass occupies residues 10-30 (LLLSKPVVLGLAACALLFLIG). Residues Asn104 and Asn155 are each glycosylated (N-linked (GlcNAc...) asparagine). Residue Cys441 coordinates heme.

This sequence belongs to the cytochrome P450 family. It depends on heme as a cofactor.

Its subcellular location is the membrane. The protein operates within secondary metabolite biosynthesis. Cytochrome P450 monooxygenase; part of the gene cluster that mediates the biosynthesis of the lipopeptide fusaristatin A. Fusaristatin A consists of a polyketide chain linked to three amino acid residues glutamine (Gln), dehydroalanine (dehydro-Ala), and beta-aminoisobutyric acid. The biosynthesis starts with formation of a linear polyketide chain by the highly reducing polyketide synthase PKS6. The gene cluster does not contain an acyl-CoA ligase or an acyl-transferase, and it is therefore predicted that the polyketide is transferred directly to the nonribosomal peptide synthetase NRPS7. Modules 1-3 from NRPS7 incorporate dehydro-Ala, Gln, and beta-aminoisobutyric acid in the compound, which is released by cyclization. The beta-aminoisobutyric acid units are most likely not freely available to the NRPS, but can be synthesized from thymine, which requires a dehydrogenase, a monooxygenase, and an aminotransferase. The fusaristatin A cluster contains a cytochrome P450 monooxygenase (FGSG_08207) and an aminotransferase (FGSG_17085), which theoretically can perform two of the enzymatic steps. The enzymes may however also be involved in biosynthesis of dehydroalanine or modification of the polyketide. The dehydro-Ala residue can be a result of cyclization, where serine is dehydrated. The last gene of the cluster encodes a protein with an A/B barrel domain found in variable enzymes, which hampers functional prediction. The polypeptide is Cytochrome P450 monooxygenase FGSG_08207 (Gibberella zeae (strain ATCC MYA-4620 / CBS 123657 / FGSC 9075 / NRRL 31084 / PH-1) (Wheat head blight fungus)).